A 548-amino-acid chain; its full sequence is Probable malate:quinone oxidoreductase (548 aa).

Residues 521 to 548 are disordered; the sequence is DKPQAADSTPKPQLKPQPVQKEVADIAL. Over residues 530-541 the composition is skewed to low complexity; that stretch reads PKPQLKPQPVQK.

This sequence belongs to the MQO family. It depends on FAD as a cofactor.

It catalyses the reaction (S)-malate + a quinone = a quinol + oxaloacetate. It functions in the pathway carbohydrate metabolism; tricarboxylic acid cycle; oxaloacetate from (S)-malate (quinone route): step 1/1. The sequence is that of Probable malate:quinone oxidoreductase from Escherichia coli O139:H28 (strain E24377A / ETEC).